Here is a 160-residue protein sequence, read N- to C-terminus: Cytochrome b6-f complex subunit 4 (160 aa).

The next 3 helical transmembrane spans lie at 36–56 (LLYM…GLAV), 95–115 (LLGV…PFIE), and 131–151 (TVFL…CLPI).

This sequence belongs to the cytochrome b family. PetD subfamily. The 4 large subunits of the cytochrome b6-f complex are cytochrome b6, subunit IV (17 kDa polypeptide, petD), cytochrome f and the Rieske protein, while the 4 small subunits are petG, petL, petM and petN. The complex functions as a dimer.

The protein resides in the plastid. The protein localises to the chloroplast thylakoid membrane. In terms of biological role, component of the cytochrome b6-f complex, which mediates electron transfer between photosystem II (PSII) and photosystem I (PSI), cyclic electron flow around PSI, and state transitions. The sequence is that of Cytochrome b6-f complex subunit 4 from Tupiella akineta (Green alga).